Here is a 647-residue protein sequence, read N- to C-terminus: Methyl-accepting chemotaxis protein McpK (647 aa).

The Cytoplasmic segment spans residues 1–16 (MYDWWVLQLAKLSVSR). A helical transmembrane segment spans residues 17–37 (KLMVGFGVLLALLLLVVISSN). Topologically, residues 38–291 (RTLTHQTALS…LRESTASRDR (254 aa)) are periplasmic. The HBM domain occupies 45-287 (ALSEQLAEVA…AGRQLRESTA (243 aa)). The helical transmembrane segment at 292 to 312 (ASLWLIAALALAFGCVAGWAI) threads the bilayer. The Cytoplasmic segment spans residues 313-647 (NRQIVRPLDE…LQAQVGRFRL (335 aa)). An HAMP domain is found at 314–370 (RQIVRPLDEALAQAEAIAAGDLGKRPQNPLTLQRRDELGQLQRVMQRMGDSLRELVG). Positions 375–611 (GVSQLASSAE…EINRSVLSVR (237 aa)) constitute a Methyl-accepting transducer domain.

The protein belongs to the methyl-accepting chemotaxis (MCP) protein family. As to quaternary structure, ligand free ligand-binding domain (LBD) is present in a monomer-dimer equilibrium. AlphaKG binding stabilizes the homodimer.

Its subcellular location is the cell inner membrane. In terms of biological role, chemotactic-signal transducers respond to changes in the concentration of attractants and repellents in the environment, transduce a signal from the outside to the inside of the cell, and facilitate sensory adaptation through the variation of the level of methylation. McpK is a chemoreceptor that specifically binds and mediates chemotaxis to alpha-ketoglutarate (alphaKG). In Pseudomonas aeruginosa (strain ATCC 15692 / DSM 22644 / CIP 104116 / JCM 14847 / LMG 12228 / 1C / PRS 101 / PAO1), this protein is Methyl-accepting chemotaxis protein McpK.